Here is a 136-residue protein sequence, read N- to C-terminus: Large ribosomal subunit protein uL22 (136 aa).

It belongs to the universal ribosomal protein uL22 family. Part of the 50S ribosomal subunit.

This protein binds specifically to 23S rRNA; its binding is stimulated by other ribosomal proteins, e.g. L4, L17, and L20. It is important during the early stages of 50S assembly. It makes multiple contacts with different domains of the 23S rRNA in the assembled 50S subunit and ribosome. Its function is as follows. The globular domain of the protein is located near the polypeptide exit tunnel on the outside of the subunit, while an extended beta-hairpin is found that lines the wall of the exit tunnel in the center of the 70S ribosome. The polypeptide is Large ribosomal subunit protein uL22 (Bacteroides fragilis (strain YCH46)).